The sequence spans 70 residues: DNA-directed RNA polymerase subunit omega (70 aa).

The protein belongs to the RNA polymerase subunit omega family. As to quaternary structure, in cyanobacteria the RNAP catalytic core is composed of 2 alpha, 1 beta, 1 beta', 1 gamma and 1 omega subunit. When a sigma factor is associated with the core the holoenzyme is formed, which can initiate transcription.

It carries out the reaction RNA(n) + a ribonucleoside 5'-triphosphate = RNA(n+1) + diphosphate. Functionally, promotes RNA polymerase assembly. Latches the N- and C-terminal regions of the beta' subunit thereby facilitating its interaction with the beta and alpha subunits. In Prochlorococcus marinus (strain NATL1A), this protein is DNA-directed RNA polymerase subunit omega.